The following is a 2138-amino-acid chain: MRLPQKTKTVLIFGDQTDSWLDGLDQVYKQAGSTPWLQSFLDDLTDAINAETKANMLDHALQESLGTFSTLQELGERYRHTTDELGMAHALLLHAVRAATLLQWVKREPNLLGRDGQAEWLGISGGLITLSARAISEDFDTLRNASLEVARLFVRLCKFTSVRSRAAEDAPGTWGWAVVGISPDELRKRLDEFQQSAGIPSIKRAQVGVTGAGWSTVIGPPSVLEIVMKQCPAVKSLAKNPLNIHALQHTIKLSPADLNFIVGNNSAFLDLPLCCPGMNLWGMDEPGATYANWGEMLKAICEQVLSRSLDIPHAVGKVNTKLDGVETIRVIQIGTTSHAPYLLGGLKGPGRHVSVQDAQSLLQASVSTSSSQSGRIAIVGMAGRGPGCDNVDEFWDLIMSKQDLCREVPKDRFDVDEYYCPNHGQGDKKCTMTTRFGCFMDKPGNFDSRFFHISPREAMLMDPGHRQFLMSTYEALEMAGYSDGHAKATDPTRIAAFYGQVSDDWHDQSHPTLGCDSYTLQGVQRAFGPGRIAWQFKWEGPTYSLDSACASTTSSIHLACMSLLSKDIDMAVAGAANILSFPHSFTCLSKAGVLSDTGNCKTYRDDADGYCRADFVGTVVLKRLEDAVAHNDNILAVVLSSGRNHSGNSTSITTSDAGAQERLFRKVLRNAHVHPDDVSYVEMHGTGTQVGDPAEVGAVGNLFKHRRPADGPIPVGSVKANFGHSEAAAGMASLLKCIKMFQTDTIPPQAGMPHALNPRFPPLSELNIKIPSEPKAFEKLSKPRRILLNNFDAAGGNACMLLEDYSDTAGTKGADPRSSHVVATSARTQAAHHANRRRLLEWLRANPTVSIEDVAYTTTARRMHHPHRFACTASSTQELIAKLEDSIDARDTKSSPPSPIVFVFGGQGSHYGGMGSELYRTSPRFRETVDLCANICEEHGFPSFLHLVTDDGIDMSTATTVQTQLAVLVLEIGLAAFWKSVGVQPSMVVGHSLGEYAALHVAGVLSLVDVLYLVGRRALLLLERCEEGAFTMLAVSMTATAALDFLQSHPQYSSCSVSCINSPTATVISGSTEQIAQLQADLTGHSKALPVPYGFHSFQMDSVLADYCTLAEGVTFSAPKIPVASTLLGSVVNKHGTFNGRYLSQQMRQAVDFVGALNVIKQKLADPIWLELGPKGVCTSFVRATFSPSSSTAEKTLSTLAGPGPGADNKAASWPPISKCLAALYMQGIAIDWLALHEPYTSCLKMVTLPSYAWDMKDYWITYTDANKNAEAAALSPAATPTAQQMISTCAQYVVQESPSSSKKIQVTFRASLAESGFGAIIGGHRMQREPICPGSAFCEAGFAAAAYVLEANSRKDDAHIAKLVLRHPTMTRPLTKNLVGPDGELLTTVIMEDASSNEIQVSWRASSAPSKGGLSYDLGSCVLEVRKDVQRLQADWDRTSYFVKARMDEVVRTAQDGHGHRFQPDIFYILFAPTVEYDSQYKCIKEAYVSSDFSEAVAEIELREDPSSTRFMASPYWGESIVHLAGFTVNANPENHLTASGTSFINSGFENFEQTVAFEAGKTYFTYVRVSRKDKGTRSCEVFVFDSDSRMIAQCSGLEFHEISNATLKQVLSGGKSKSVLKPDNAAPLKAPEKKEDATPTAPKKSADPGKEEEEEGDTATPAAVGEFEVIIQTIAIETGMDTSELTDDSALADLGVDSIMAIEVAARVSNATGRELTPSFVSEYPTIGDLRRAFAMAPSSSSSTSASESVSESLDDSSSTSRSATPSSSMKETEAGFVEDDSLRKKPVISAAAAVVTAAGVAETQATKVQPQAPAATAADNDSSPAPSVRIMLLQGRPAKSRGAADGSHAPPPFYMIADGTGSIATYIHLASSLQSKMPIYGIDSPFLRCPDRLTPEVGIPGAARLIVDALLKKQPDKDVPFWIGGFSGGAMVAYEVCRQLSAAGRPVDGLLLIDMCAPRQVAAVPEDDGEVGLAMFDAVSGQDESGVWSATDGTRRHLGAMFSCVATYNPEPLPPRGGGNTPAKRAAMIWARKGMIDRCVSSVRFRQMLADRGISPEPYPGFMEDPKLGAVAWSLPHKTGADLGPNGWERYLGGDRLLCMSIEADHLEMPTPGYAQLLGETMDKAFRYFRDGLMD.

The tract at residues 11–249 (LIFGDQTDSW…NPLNIHALQH (239 aa)) is N-terminal acylcarrier protein transacylase (SAT) domain. Residues 373–804 (SGRIAIVGMA…GGNACMLLED (432 aa)) enclose the Ketosynthase family 3 (KS3) domain. Active-site for beta-ketoacyl synthase activity residues include cysteine 549, histidine 684, and histidine 724. The malonyl-CoA:ACP transacylase (MAT) domain stretch occupies residues 901–1184 (VFVFGGQGSH…KGVCTSFVRA (284 aa)). The active-site For acyl/malonyl transferase activity is the serine 992. Residues 1291–1437 (AQYVVQESPS…KDVQRLQADW (147 aa)) form an N-terminal hotdog fold region. Residues 1291-1610 (AQYVVQESPS…FHEISNATLK (320 aa)) form the PKS/mFAS DH domain. The tract at residues 1303–1607 (KKIQVTFRAS…GLEFHEISNA (305 aa)) is product template (PT) domain. The interval 1459-1610 (HGHRFQPDIF…FHEISNATLK (152 aa)) is C-terminal hotdog fold. Residues 1618–1666 (SKSVLKPDNAAPLKAPEKKEDATPTAPKKSADPGKEEEEEGDTATPAAV) are disordered. A Carrier domain is found at 1666–1740 (VGEFEVIIQT…DLRRAFAMAP (75 aa)). An O-(pantetheine 4'-phosphoryl)serine modification is found at serine 1700. A compositionally biased stretch (low complexity) spans 1740–1771 (PSSSSSTSASESVSESLDDSSSTSRSATPSSS). 2 disordered regions span residues 1740-1781 (PSSS…GFVE) and 1807-1828 (QATK…SSPA). Positions 1860 to 2006 (ADGTGSIATY…TRRHLGAMFS (147 aa)) are thioesterase (TE) domain.

The protein operates within secondary metabolite biosynthesis. In terms of biological role, non-reducing polyketide synthase; part of the gene cluster that mediates the biosynthesis of radicicol, a resorcylic acid lactone (RAL) that irreversibly inhibits the HSP90 molecular chaperone, an important target for cancer chemotherapy. The cluster encodes only two apparent post-PKS enzymes, a cytochrome P450 monooxygenase (radP) and a non-heme halogenase (radH) that introduce the epoxide and the chlorine, respectively. If this cluster includes all the genes required for radicicol biosynthesis, the remaining structural features of radicicol are presumably generated by the PKSs rads1 and rads2. The C-2' ketone could arise if the R-PKS rads1 and NR-PKS rads2 each carry out four iterations, in contrast to the five iteration-three iteration split for the hypothemycin PKSs. The origin of the cis 5',6' double bond is not known. The radicicol R-PKS rads1 ER domain may catalyze either double bond isomerization or reduction in the third iteration. This is Non-reducing polyketide synthase rads2 from Floropilus chiversii (Chaetomium chiversii).